A 387-amino-acid polypeptide reads, in one-letter code: F-box protein At5g41490 (387 aa).

The region spanning 2–47 (ATMITNLRRDLIEEIISRVPLRSMKAVRLTCKSWNNISKSEIFTKM) is the F-box domain.

The chain is F-box protein At5g41490 from Arabidopsis thaliana (Mouse-ear cress).